A 134-amino-acid polypeptide reads, in one-letter code: Large ribosomal subunit protein eL32 (134 aa).

Belongs to the eukaryotic ribosomal protein eL32 family.

The sequence is that of Large ribosomal subunit protein eL32 (RPL32) from Tetrahymena thermophila (strain SB210).